The chain runs to 317 residues: Olfactory receptor-like protein OLF3 (317 aa).

The Extracellular segment spans residues 1–25 (MGTGNQTWVREFVLLGLSSDWDTEV). N-linked (GlcNAc...) asparagine glycosylation occurs at Asn-5. A helical membrane pass occupies residues 26–49 (SLFVLFLITYMVTVLGNFLIILLI). The Cytoplasmic segment spans residues 50–57 (RLDSRLHT). Residues 58–79 (PMYFFLTNLSLVDVSYATSIIP) form a helical membrane-spanning segment. The Extracellular segment spans residues 80-100 (QMLAHLLAAHKAIPFVSCAAQ). The helical transmembrane segment at 101–120 (LFFSLGLGGIEFVLLAVMAY) threads the bilayer. The Cytoplasmic portion of the chain corresponds to 121–139 (DRYVAVCDPLRYSVIMHGG). Residues 140–158 (LCTRLAITSWVSGSMNSLM) traverse the membrane as a helical segment. Topologically, residues 159-196 (QTVITFQLPMCTNKYIDHISCELLAVVRLACVDTSSNE) are extracellular. The chain crosses the membrane as a helical span at residues 197–219 (IAIMVSSIVLLMTPFCLVLLSYI). At 220–236 (QIISTILKIQSTEGRKK) the chain is on the cytoplasmic side. A helical membrane pass occupies residues 237–260 (AFHTCASHLTVVVLCYGMAIFTYI). Residues 261–272 (QPRSSPSVLQEK) are Extracellular-facing. A helical transmembrane segment spans residues 273-292 (LISLFYSVLTPMLNPMIYSV). The Cytoplasmic portion of the chain corresponds to 293-317 (RNKEVKGAWQKLLGQLTGITSKLAT).

This sequence belongs to the G-protein coupled receptor 1 family.

The protein resides in the cell membrane. Functionally, putative odorant or sperm cell receptor. The polypeptide is Olfactory receptor-like protein OLF3 (Canis lupus familiaris (Dog)).